The following is a 193-amino-acid chain: Ion-translocating oxidoreductase complex subunit A (193 aa).

Transmembrane regions (helical) follow at residues leucine 5–leucine 25, methionine 39–isoleucine 59, isoleucine 63–valine 83, leucine 102–leucine 122, alanine 134–isoleucine 154, and alanine 171–valine 191.

The protein belongs to the NqrDE/RnfAE family. As to quaternary structure, the complex is composed of six subunits: RsxA, RsxB, RsxC, RsxD, RsxE and RsxG.

Its subcellular location is the cell inner membrane. Functionally, part of a membrane-bound complex that couples electron transfer with translocation of ions across the membrane. Required to maintain the reduced state of SoxR. This Shigella boydii serotype 18 (strain CDC 3083-94 / BS512) protein is Ion-translocating oxidoreductase complex subunit A.